The chain runs to 490 residues: Cytochrome P450 2C13, male-specific (490 aa).

Cysteine 435 is a binding site for heme.

It belongs to the cytochrome P450 family. It depends on heme as a cofactor. As to expression, liver, and to a lesser extent in prostate, kidney, heart and brain.

It localises to the endoplasmic reticulum membrane. The protein resides in the microsome membrane. It catalyses the reaction an organic molecule + reduced [NADPH--hemoprotein reductase] + O2 = an alcohol + oxidized [NADPH--hemoprotein reductase] + H2O + H(+). Its function is as follows. Cytochromes P450 are a group of heme-thiolate monooxygenases. In liver microsomes, this enzyme is involved in an NADPH-dependent electron transport pathway. It oxidizes a variety of structurally unrelated compounds, including steroids, fatty acids, and xenobiotics. The sequence is that of Cytochrome P450 2C13, male-specific (Cyp2c13) from Rattus norvegicus (Rat).